Reading from the N-terminus, the 213-residue chain is Vacuolar ATPase assembly integral membrane protein vph2 (213 aa).

A run of 2 helical transmembrane segments spans residues 113–133 (ISAIINILFTVVGTVTAVWYC) and 142–162 (KIALCAFSAILVLVADTFLYV).

The protein resides in the endoplasmic reticulum membrane. Its function is as follows. Required for vacuolar ATPase assembly. This Schizosaccharomyces pombe (strain 972 / ATCC 24843) (Fission yeast) protein is Vacuolar ATPase assembly integral membrane protein vph2 (vph2).